The primary structure comprises 167 residues: 6,7-dimethyl-8-ribityllumazine synthase (167 aa).

5-amino-6-(D-ribitylamino)uracil is bound by residues phenylalanine 26, 60 to 62 (AFE), and 89 to 91 (AII). 94–95 (ET) is a (2S)-2-hydroxy-3-oxobutyl phosphate binding site. Histidine 97 acts as the Proton donor in catalysis. Phenylalanine 122 contributes to the 5-amino-6-(D-ribitylamino)uracil binding site. Arginine 136 is a (2S)-2-hydroxy-3-oxobutyl phosphate binding site.

It belongs to the DMRL synthase family. Forms an icosahedral capsid composed of 60 subunits, arranged as a dodecamer of pentamers.

The catalysed reaction is (2S)-2-hydroxy-3-oxobutyl phosphate + 5-amino-6-(D-ribitylamino)uracil = 6,7-dimethyl-8-(1-D-ribityl)lumazine + phosphate + 2 H2O + H(+). The protein operates within cofactor biosynthesis; riboflavin biosynthesis; riboflavin from 2-hydroxy-3-oxobutyl phosphate and 5-amino-6-(D-ribitylamino)uracil: step 1/2. Catalyzes the formation of 6,7-dimethyl-8-ribityllumazine by condensation of 5-amino-6-(D-ribitylamino)uracil with 3,4-dihydroxy-2-butanone 4-phosphate. This is the penultimate step in the biosynthesis of riboflavin. This chain is 6,7-dimethyl-8-ribityllumazine synthase, found in Ruthia magnifica subsp. Calyptogena magnifica.